Reading from the N-terminus, the 892-residue chain is Alanine--tRNA ligase (892 aa).

4 residues coordinate Zn(2+): histidine 580, histidine 584, cysteine 682, and histidine 686.

This sequence belongs to the class-II aminoacyl-tRNA synthetase family. Zn(2+) is required as a cofactor.

It is found in the cytoplasm. The catalysed reaction is tRNA(Ala) + L-alanine + ATP = L-alanyl-tRNA(Ala) + AMP + diphosphate. In terms of biological role, catalyzes the attachment of alanine to tRNA(Ala) in a two-step reaction: alanine is first activated by ATP to form Ala-AMP and then transferred to the acceptor end of tRNA(Ala). Also edits incorrectly charged Ser-tRNA(Ala) and Gly-tRNA(Ala) via its editing domain. This Salinispora tropica (strain ATCC BAA-916 / DSM 44818 / JCM 13857 / NBRC 105044 / CNB-440) protein is Alanine--tRNA ligase.